The sequence spans 72 residues: Large ribosomal subunit protein uL29 (72 aa).

This sequence belongs to the universal ribosomal protein uL29 family.

This is Large ribosomal subunit protein uL29 from Caldicellulosiruptor bescii (strain ATCC BAA-1888 / DSM 6725 / KCTC 15123 / Z-1320) (Anaerocellum thermophilum).